The chain runs to 327 residues: GTPase Obg (327 aa).

The region spanning 1–159 (MQFIDQANII…WEVQLELKLL (159 aa)) is the Obg domain. The region spanning 160 to 327 (AEVGIIGLPN…SLLSEVWKRI (168 aa)) is the OBG-type G domain. ATP is bound by residues 166–173 (GLPNAGKS), 191–195 (FTTLI), 213–216 (DIPG), 280–283 (NKIE), and 309–311 (SSS). Mg(2+)-binding residues include serine 173 and threonine 193.

Belongs to the TRAFAC class OBG-HflX-like GTPase superfamily. OBG GTPase family. In terms of assembly, monomer. Requires Mg(2+) as cofactor.

The protein resides in the cytoplasm. Its function is as follows. An essential GTPase which binds GTP, GDP and possibly (p)ppGpp with moderate affinity, with high nucleotide exchange rates and a fairly low GTP hydrolysis rate. Plays a role in control of the cell cycle, stress response, ribosome biogenesis and in those bacteria that undergo differentiation, in morphogenesis control. This is GTPase Obg from Prochlorococcus marinus (strain AS9601).